The chain runs to 664 residues: Gametogenetin-binding protein 2 (664 aa).

Disordered stretches follow at residues Gln-375–Glu-425 and Lys-447–Ser-476. Residues Glu-376–Lys-388 are compositionally biased toward basic residues. Polar residues predominate over residues Pro-452–Gly-475.

It localises to the cytoplasm. In terms of biological role, may be involved in spermatogenesis. The sequence is that of Gametogenetin-binding protein 2 (ggnbp2) from Xenopus laevis (African clawed frog).